The following is a 193-amino-acid chain: dTTP/UTP pyrophosphatase (193 aa).

Catalysis depends on Asp-75, which acts as the Proton acceptor.

Belongs to the Maf family. YhdE subfamily. A divalent metal cation is required as a cofactor.

The protein resides in the cytoplasm. The enzyme catalyses dTTP + H2O = dTMP + diphosphate + H(+). It carries out the reaction UTP + H2O = UMP + diphosphate + H(+). Its function is as follows. Nucleoside triphosphate pyrophosphatase that hydrolyzes dTTP and UTP. May have a dual role in cell division arrest and in preventing the incorporation of modified nucleotides into cellular nucleic acids. This is dTTP/UTP pyrophosphatase from Chlorobium luteolum (strain DSM 273 / BCRC 81028 / 2530) (Pelodictyon luteolum).